The following is a 144-amino-acid chain: Effector EagT6 (144 aa).

Homodimer. Two dimers interact with Tse6; this interaction is crucial for Tse6 loading onto VgrG1a.

Plays an essential role in toxin Tse6 delivery to target cells and specifically in the loading of Tse6 onto VgrG1a. This chain is Effector EagT6, found in Pseudomonas aeruginosa (strain ATCC 15692 / DSM 22644 / CIP 104116 / JCM 14847 / LMG 12228 / 1C / PRS 101 / PAO1).